The following is a 355-amino-acid chain: Adenine deaminase (355 aa).

Zn(2+) contacts are provided by histidine 24, histidine 26, and histidine 204. Catalysis depends on glutamate 207, which acts as the Proton donor. Aspartate 285 is a binding site for Zn(2+). Aspartate 286 provides a ligand contact to substrate.

Belongs to the metallo-dependent hydrolases superfamily. Adenosine and AMP deaminases family. Adenine deaminase type 2 subfamily. Zn(2+) is required as a cofactor.

It catalyses the reaction adenine + H2O + H(+) = hypoxanthine + NH4(+). Functionally, catalyzes the hydrolytic deamination of adenine to hypoxanthine. Plays an important role in the purine salvage pathway and in nitrogen catabolism. This is Adenine deaminase from Geotalea uraniireducens (strain Rf4) (Geobacter uraniireducens).